A 320-amino-acid polypeptide reads, in one-letter code: Phosphatidylserine decarboxylase proenzyme (320 aa).

Catalysis depends on charge relay system; for autoendoproteolytic cleavage activity residues D90, H147, and S254. The Schiff-base intermediate with substrate; via pyruvic acid; for decarboxylase activity role is filled by S254. S254 carries the pyruvic acid (Ser); by autocatalysis modification. The tract at residues 290–320 (TAAAEPAPLPEEEIRAEHRASPLVDDKQDQG) is disordered. A compositionally biased stretch (basic and acidic residues) spans 301-320 (EEIRAEHRASPLVDDKQDQG).

The protein belongs to the phosphatidylserine decarboxylase family. PSD-B subfamily. Prokaryotic type I sub-subfamily. Heterodimer of a large membrane-associated beta subunit and a small pyruvoyl-containing alpha subunit. Pyruvate serves as cofactor. Is synthesized initially as an inactive proenzyme. Formation of the active enzyme involves a self-maturation process in which the active site pyruvoyl group is generated from an internal serine residue via an autocatalytic post-translational modification. Two non-identical subunits are generated from the proenzyme in this reaction, and the pyruvate is formed at the N-terminus of the alpha chain, which is derived from the carboxyl end of the proenzyme. The autoendoproteolytic cleavage occurs by a canonical serine protease mechanism, in which the side chain hydroxyl group of the serine supplies its oxygen atom to form the C-terminus of the beta chain, while the remainder of the serine residue undergoes an oxidative deamination to produce ammonia and the pyruvoyl prosthetic group on the alpha chain. During this reaction, the Ser that is part of the protease active site of the proenzyme becomes the pyruvoyl prosthetic group, which constitutes an essential element of the active site of the mature decarboxylase.

The protein resides in the cell membrane. The enzyme catalyses a 1,2-diacyl-sn-glycero-3-phospho-L-serine + H(+) = a 1,2-diacyl-sn-glycero-3-phosphoethanolamine + CO2. It functions in the pathway phospholipid metabolism; phosphatidylethanolamine biosynthesis; phosphatidylethanolamine from CDP-diacylglycerol: step 2/2. Catalyzes the formation of phosphatidylethanolamine (PtdEtn) from phosphatidylserine (PtdSer). The polypeptide is Phosphatidylserine decarboxylase proenzyme (Klebsiella pneumoniae subsp. pneumoniae (strain ATCC 700721 / MGH 78578)).